Reading from the N-terminus, the 402-residue chain is Phosphoglycerate kinase (402 aa).

Residues 24 to 26 (DFN), Arg40, 63 to 66 (HFGR), Arg122, and Arg155 contribute to the substrate site. Residues Lys206, Gly297, Glu328, and 357–360 (GGDS) contribute to the ATP site.

Belongs to the phosphoglycerate kinase family. As to quaternary structure, monomer.

It localises to the cytoplasm. The catalysed reaction is (2R)-3-phosphoglycerate + ATP = (2R)-3-phospho-glyceroyl phosphate + ADP. The protein operates within carbohydrate degradation; glycolysis; pyruvate from D-glyceraldehyde 3-phosphate: step 2/5. This chain is Phosphoglycerate kinase, found in Parasynechococcus marenigrum (strain WH8102).